The following is a 343-amino-acid chain: S-adenosylmethionine:tRNA ribosyltransferase-isomerase (343 aa).

This sequence belongs to the QueA family. Monomer.

It is found in the cytoplasm. It carries out the reaction 7-aminomethyl-7-carbaguanosine(34) in tRNA + S-adenosyl-L-methionine = epoxyqueuosine(34) in tRNA + adenine + L-methionine + 2 H(+). Its pathway is tRNA modification; tRNA-queuosine biosynthesis. Functionally, transfers and isomerizes the ribose moiety from AdoMet to the 7-aminomethyl group of 7-deazaguanine (preQ1-tRNA) to give epoxyqueuosine (oQ-tRNA). In Coxiella burnetii (strain Dugway 5J108-111), this protein is S-adenosylmethionine:tRNA ribosyltransferase-isomerase.